The following is a 710-amino-acid chain: U3 small nucleolar RNA-associated protein 4 (710 aa).

WD repeat units follow at residues 11 to 59 (YTPS…CLKT), 64 to 105 (GVDR…PLVN), 108 to 147 (SNAG…GVIE), 154 to 192 (RQTS…SAII), 199 to 241 (RARK…LSQS), 290 to 327 (FHSH…RQFN), 328 to 365 (RKNH…LWRI), 488 to 527 (SMCD…YSEL), and 529 to 569 (RVNT…LSEW).

In terms of assembly, component of the ribosomal small subunit (SSU) processome.

The protein resides in the nucleus. It localises to the nucleolus. Functionally, involved in nucleolar processing of pre-18S ribosomal RNA. Required for optimal pre-ribosomal RNA transcription by RNA polymerase I together with a subset of U3 proteins required for transcription (t-UTPs). This Schizosaccharomyces pombe (strain 972 / ATCC 24843) (Fission yeast) protein is U3 small nucleolar RNA-associated protein 4 (utp4).